We begin with the raw amino-acid sequence, 727 residues long: Plakophilin-1 (727 aa).

Positions 1–235 are required for binding to single stranded DNA; sequence MNHSPLKTAL…SFSHSRASSK (235 aa). Residues 1–287 form a required for interaction with EIF4A1 region; that stretch reads MNHSPLKTAL…ESAKQQVYQL (287 aa). Serine 4 bears the Phosphoserine mark. A disordered region spans residues 48-69; sequence TVKRQKSKSSQSSTLSHSNRGS. Phosphorylation in this region is required for cytoplasmic localization and protein stabilization stretches follow at residues 54-69 and 117-192; these read SKSS…NRGS and RFSS…STCS. Phosphoserine occurs at positions 119, 120, 122, and 143. The tract at residues 161–270 is required for WNT-mediated nuclear localization; that stretch reads YCDPRGTLRK…KCQAIGAYYI (110 aa). 9 ARM repeats span residues 244-275, 276-317, 318-360, 361-412, 413-443, 505-536, 537-583, 584-629, and 630-693; these read SGLT…HTCF, QDES…NLVF, RSTT…NLSS, TDEL…GCLR, NLSS…NCVA, NYDC…LNLM, GKSK…IARL, LQSG…SHTG, and NTSN…DMWS.

The protein belongs to the beta-catenin family. Part of a complex that contains DSG3, PKP1, YAP1 and YWHAG; the complex is required for localization of DSG3 and YAP1 to the cell membrane in keratinocytes. Interacts (via N-terminus) with KRT5/CK5, KRT8/CK8 (via rod domain), KRT15/CK15 and KRT18/CK18 (via rod domain) as part of intermediate filaments. Interacts with VIM (via rod domain). Interacts with DSP. Interacts with DES. Interacts with FXR1; the interaction may facilitate the binding of PKP1 to PKP2, PKP3 and DSP mRNA. Interacts (via N-terminus) with EIF4A1; the interaction promotes EIF4A1 recruitment to the cap-dependent translation complex and EIF4A1 ATPase activity. Interacts with TJP1/ZO-1; the interaction facilitates TJP1/ZO-1 localization to the plasma membrane. Interacts (when phosphorylated) with YWHAG; the interaction results in translocation of PKP1 to the cytoplasm and loss of intercellular adhesion in keratinocytes. Post-translationally, phosphorylated by AKT2; required for interaction with YWHAG and subsequent localization away from desmosomes to the cytoplasm. Phosphorylation of Ser-119 by AKT2 promotes PKP1-driven cap-dependent mRNA translation and decreases intercellular adhesion, phosphorylation is promoted by insulin. Phosphorylation by RIPK4 at the N-terminus is required for its role in differentiation of keratinocytes and DSG1 localization at cell junctions.

Its subcellular location is the nucleus. The protein resides in the cytoplasm. It is found in the perinuclear region. The protein localises to the cell junction. It localises to the desmosome. Its subcellular location is the cell membrane. The protein resides in the stress granule. In terms of biological role, a component of desmosome cell-cell junctions which are required for positive regulation of cellular adhesion. Plays a role in desmosome protein expression regulation and localization to the desmosomal plaque, thereby maintaining cell sheet integrity and anchorage of desmosomes to intermediate filaments. Required for localization of DSG3 and YAP1 to the cell membrane in keratinocytes in response to mechanical strain, via the formation of an interaction complex composed of DSG3, YAP1, PKP1 and YWHAG. Positively regulates differentiation of keratinocytes, potentially via promoting localization of DSG1 at desmosome cell junctions. Required for calcium-independent development and maturation of desmosome plaques specifically at lateral cell-cell contacts in differentiating keratinocytes. Plays a role in the maintenance of DSG3 protein abundance, DSG3 clustering and localization of these clusters to the cell membrane in keratinocytes. May also promote keratinocyte proliferation and morphogenesis during postnatal development. Required for tight junction inside-out transepidermal barrier function of the skin. Promotes Wnt-mediated proliferation and differentiation of ameloblasts, via facilitating TJP1/ZO-1 localization to tight junctions. Binds single-stranded DNA (ssDNA), and may thereby play a role in sensing DNA damage and promoting cell survival. Positively regulates cap-dependent translation and as a result cell proliferation, via recruitment of EIF4A1 to the initiation complex and promotion of EIF4A1 ATPase activity. Regulates the mRNA stability and protein abundance of desmosome components PKP2, PKP3, DSC2 and DSP, potentially via its interaction with FXR1. May facilitate the formation of intermediate filaments. This Bos taurus (Bovine) protein is Plakophilin-1 (PKP1).